The primary structure comprises 124 residues: UPF0231 protein Sputcn32_0682 (124 aa).

This sequence belongs to the UPF0231 family.

The polypeptide is UPF0231 protein Sputcn32_0682 (Shewanella putrefaciens (strain CN-32 / ATCC BAA-453)).